A 144-amino-acid polypeptide reads, in one-letter code: Cytochrome c-type biogenesis protein CcmE (144 aa).

The Cytoplasmic segment spans residues 1 to 7; the sequence is MKPRHKR. The helical; Signal-anchor for type II membrane protein transmembrane segment at 8–28 threads the bilayer; sequence ALIIIAALIAIGVAALLILNA. Residues 29–144 are Periplasmic-facing; it reads LNSNIALYVT…DQAQKNGSAK (116 aa). Positions 121 and 125 each coordinate heme.

It belongs to the CcmE/CycJ family.

The protein resides in the cell inner membrane. Its function is as follows. Heme chaperone required for the biogenesis of c-type cytochromes. Transiently binds heme delivered by CcmC and transfers the heme to apo-cytochromes in a process facilitated by CcmF and CcmH. The sequence is that of Cytochrome c-type biogenesis protein CcmE from Polynucleobacter necessarius subsp. necessarius (strain STIR1).